Reading from the N-terminus, the 103-residue chain is Integration host factor subunit beta (103 aa).

Belongs to the bacterial histone-like protein family. Heterodimer of an alpha and a beta chain.

In terms of biological role, this protein is one of the two subunits of integration host factor, a specific DNA-binding protein that functions in genetic recombination as well as in transcriptional and translational control. The sequence is that of Integration host factor subunit beta from Sinorhizobium medicae (strain WSM419) (Ensifer medicae).